The following is a 268-amino-acid chain: WUSCHEL-related homeobox 12 (268 aa).

Positions 1 to 16 are enriched in polar residues; sequence MNQEGASHSPSSTSTE. Disordered regions lie at residues 1-22 and 173-198; these read MNQEGASHSPSSTSTEPVRARW and SDHNHQQQHHSSNAASVLNPSDQNSN. The segment at residues 17-81 is a DNA-binding region (homeobox; WUS-type); sequence PVRARWSPKP…NRRSRSRRRH (65 aa).

This sequence belongs to the WUS homeobox family.

The protein resides in the nucleus. Functionally, transcription factor which may be involved in developmental processes. This Arabidopsis thaliana (Mouse-ear cress) protein is WUSCHEL-related homeobox 12 (WOX12).